We begin with the raw amino-acid sequence, 3380 residues long: Apolipophorins (3380 aa).

Positions M1–S21 are cleaved as a signal peptide. Positions Y40–V646 constitute a Vitellogenin domain. 6 N-linked (GlcNAc...) asparagine glycosylation sites follow: N132, N649, N969, N2174, N2851, and N3177. The region spanning A2815–A2979 is the VWFD domain. C2839 and C2978 are disulfide-bonded.

Cleaved into 2 chains by furin protease. However, prevention of cleavage does not impair its function. Post-translationally, N-glycosylated. Present in brain, hemolymph, fat body and eyes.

The protein localises to the secreted. Functionally, constitutes the major component of lipophorin, which mediates transport for various types of lipids in hemolymph. Acts by forming lipoprotein particles that bind lipoproteins and lipids. May be required for morphogens wingless (wg) and hedgehog (hh) function, possibly by acting as vehicles for the movement of wg and hh. The protein is Apolipophorins of Locusta migratoria (Migratory locust).